Here is a 309-residue protein sequence, read N- to C-terminus: tRNA pseudouridine synthase B (309 aa).

The active-site Nucleophile is Asp39.

The protein belongs to the pseudouridine synthase TruB family. Type 1 subfamily.

It catalyses the reaction uridine(55) in tRNA = pseudouridine(55) in tRNA. Functionally, responsible for synthesis of pseudouridine from uracil-55 in the psi GC loop of transfer RNAs. In Bacillus subtilis (strain 168), this protein is tRNA pseudouridine synthase B.